Here is a 152-residue protein sequence, read N- to C-terminus: MTEYKKVIAQNKKAIFNYFIEEILEAGIVLKGSEVQSLRQGKASIDESYASDNGHEVFLYNCHITEYEKANRFNHSTRRPRKLLLHTKEIKKIIGKIRIKGYTLVALSMYFNKNNKVKVELGIAKGKKLYDKRATIKEKDWKKDQSRLIRQK.

It belongs to the SmpB family.

Its subcellular location is the cytoplasm. Required for rescue of stalled ribosomes mediated by trans-translation. Binds to transfer-messenger RNA (tmRNA), required for stable association of tmRNA with ribosomes. tmRNA and SmpB together mimic tRNA shape, replacing the anticodon stem-loop with SmpB. tmRNA is encoded by the ssrA gene; the 2 termini fold to resemble tRNA(Ala) and it encodes a 'tag peptide', a short internal open reading frame. During trans-translation Ala-aminoacylated tmRNA acts like a tRNA, entering the A-site of stalled ribosomes, displacing the stalled mRNA. The ribosome then switches to translate the ORF on the tmRNA; the nascent peptide is terminated with the 'tag peptide' encoded by the tmRNA and targeted for degradation. The ribosome is freed to recommence translation, which seems to be the essential function of trans-translation. The chain is SsrA-binding protein from Rickettsia typhi (strain ATCC VR-144 / Wilmington).